We begin with the raw amino-acid sequence, 551 residues long: Serine beta-lactamase-like protein LACTB, mitochondrial (551 aa).

Residues 1-113 constitute a mitochondrion transit peptide; it reads MYRLLSSVTA…RAIESSRDLL (113 aa). The segment at 69 to 101 is disordered; that stretch reads PADPEASGTTELSHEQALSPGSPHTPAPPAARG. Ser162 serves as the catalytic Acyl-ester intermediate. A disordered region spans residues 237 to 287; sequence LKMVKGTPPPSDQEKELKEKGGKNNEKSDAPKAKVEQDSEARCRSAKPGKK. A compositionally biased stretch (basic and acidic residues) spans 248 to 279; that stretch reads DQEKELKEKGGKNNEKSDAPKAKVEQDSEARC. 2 positions are modified to N6-succinyllysine: Lys287 and Lys288. Lys301 and Lys346 each carry N6-acetyllysine.

The protein belongs to the peptidase S12 family. Expressed predominantly in liver.

It localises to the mitochondrion. In terms of biological role, mitochondrial serine protease that acts as a regulator of mitochondrial lipid metabolism. Acts by decreasing protein levels of PISD, a mitochondrial enzyme that converts phosphatidylserine (PtdSer) to phosphatidylethanolamine (PtdEtn), thereby affecting mitochondrial lipid metabolism. It is unclear whether it acts directly by mediating proteolysis of PISD or by mediating proteolysis of another lipid metabolism protein. Acts as a tumor suppressor that has the ability to inhibit proliferation of multiple types of cancer cells: probably by promoting decreased levels of PISD, thereby affecting mitochondrial lipid metabolism. This Mus musculus (Mouse) protein is Serine beta-lactamase-like protein LACTB, mitochondrial.